A 473-amino-acid chain; its full sequence is Aspartyl/glutamyl-tRNA(Asn/Gln) amidotransferase subunit B (473 aa).

The protein belongs to the GatB/GatE family. GatB subfamily. As to quaternary structure, heterotrimer of A, B and C subunits.

The catalysed reaction is L-glutamyl-tRNA(Gln) + L-glutamine + ATP + H2O = L-glutaminyl-tRNA(Gln) + L-glutamate + ADP + phosphate + H(+). It carries out the reaction L-aspartyl-tRNA(Asn) + L-glutamine + ATP + H2O = L-asparaginyl-tRNA(Asn) + L-glutamate + ADP + phosphate + 2 H(+). Allows the formation of correctly charged Asn-tRNA(Asn) or Gln-tRNA(Gln) through the transamidation of misacylated Asp-tRNA(Asn) or Glu-tRNA(Gln) in organisms which lack either or both of asparaginyl-tRNA or glutaminyl-tRNA synthetases. The reaction takes place in the presence of glutamine and ATP through an activated phospho-Asp-tRNA(Asn) or phospho-Glu-tRNA(Gln). This Francisella tularensis subsp. mediasiatica (strain FSC147) protein is Aspartyl/glutamyl-tRNA(Asn/Gln) amidotransferase subunit B.